A 107-amino-acid chain; its full sequence is DNA-directed RNA polymerase subunit omega (107 aa).

Belongs to the RNA polymerase subunit omega family. The RNAP catalytic core consists of 2 alpha, 1 beta, 1 beta' and 1 omega subunit. When a sigma factor is associated with the core the holoenzyme is formed, which can initiate transcription.

The enzyme catalyses RNA(n) + a ribonucleoside 5'-triphosphate = RNA(n+1) + diphosphate. Its function is as follows. Promotes RNA polymerase assembly. Latches the N- and C-terminal regions of the beta' subunit thereby facilitating its interaction with the beta and alpha subunits. This Oenococcus oeni (strain ATCC BAA-331 / PSU-1) protein is DNA-directed RNA polymerase subunit omega.